Here is a 173-residue protein sequence, read N- to C-terminus: Photosystem I assembly protein Ycf3 (173 aa).

TPR repeat units follow at residues 35–68, 72–105, and 120–153; these read AYIY…EENK, GETL…NPKQ, and GRFA…YPGG.

This sequence belongs to the Ycf3 family.

The protein localises to the cellular thylakoid membrane. Essential for the assembly of the photosystem I (PSI) complex. May act as a chaperone-like factor to guide the assembly of the PSI subunits. This chain is Photosystem I assembly protein Ycf3, found in Prochlorococcus marinus subsp. pastoris (strain CCMP1986 / NIES-2087 / MED4).